Reading from the N-terminus, the 85-residue chain is Delta/kappa-theraphotoxin-Pm1a (85 aa).

Positions 1-19 are cleaved as a signal peptide; that stretch reads MKTFVFIVLVALAFVLTAA. Residues 20-43 constitute a propeptide that is removed on maturation; that stretch reads KEERANPSELVSALAELVMLDAER. Cystine bridges form between Cys50-Cys64, Cys57-Cys69, and Cys63-Cys77.

This sequence belongs to the neurotoxin 10 (Hwtx-1) family. As to expression, expressed by the venom gland.

It localises to the secreted. Multimodal toxin that enhances nociceptor excitability mainly by the simultaneous stimulation of repetitive firing (through Nav1.8/SCN10A channel current enhancement) and impairment of repolarization (by inhibiting delayed rectifier current of Kv2.1/KCNB1), with a potential contribution from tetrodotoxin-sensitive voltage-gated sodium channels (Nav) modified excitability. Enhances Nav1.8/SCN10A currents (EC(50)=1.1 uM), modifies the channel gating by a right-shift in steady-state inactivation and delays open-state inactivation. Also decreases Kv2.1/KCNB1 currents (IC(50)=0.43 uM) and causes a depolarizing shift in the voltage dependence of activation without change in steady-state inactivation. In addition, inhibits peak currents of human sodium channels (Nav1.1 to Nav1.7, IC(50)=0.38-2.3 uM) and delays fast inactivation of Nav1.1/SCN1A, Nav1.3/SCN3A, Nav1.6/SCN8A, and Nav1.7/SCN9A. In small dorsal root ganglion neurons, induces hyperexcitability by enhancing tetrodotoxin-resistant sodium currents, impairing repolarization and lowering the threshold of action potential firing, consistent with the severe pain associated with envenomation. In vivo, elicits nocifensive behavior in mice after intraplantar injection. This is Delta/kappa-theraphotoxin-Pm1a from Pelinobius muticus (King baboon spider).